The chain runs to 286 residues: Polyamine aminopropyltransferase (286 aa).

Residues 5 to 238 (TMWHETLHDQ…GIMTFAWATD (234 aa)) form the PABS domain. Q33 contributes to the S-methyl-5'-thioadenosine binding site. H64 and D88 together coordinate spermidine. S-methyl-5'-thioadenosine contacts are provided by residues E108 and 140–141 (DG). D158 (proton acceptor) is an active-site residue. Residue 158 to 161 (DCTD) coordinates spermidine. Residue P165 participates in S-methyl-5'-thioadenosine binding.

Belongs to the spermidine/spermine synthase family. As to quaternary structure, homodimer or homotetramer.

Its subcellular location is the cytoplasm. It catalyses the reaction S-adenosyl 3-(methylsulfanyl)propylamine + putrescine = S-methyl-5'-thioadenosine + spermidine + H(+). The protein operates within amine and polyamine biosynthesis; spermidine biosynthesis; spermidine from putrescine: step 1/1. In terms of biological role, catalyzes the irreversible transfer of a propylamine group from the amino donor S-adenosylmethioninamine (decarboxy-AdoMet) to putrescine (1,4-diaminobutane) to yield spermidine. This chain is Polyamine aminopropyltransferase, found in Salmonella enteritidis PT4 (strain P125109).